The chain runs to 438 residues: tRNA wybutosine-synthesizing protein 2 homolog (438 aa).

S-adenosyl-L-methionine-binding positions include Ser-209, Lys-216, Glu-256, and 284 to 285; that span reads DN.

It belongs to the class I-like SAM-binding methyltransferase superfamily. TRM5/TYW2 family.

It carries out the reaction 4-demethylwyosine(37) in tRNA(Phe) + S-adenosyl-L-methionine = 4-demethyl-7-[(3S)-3-amino-3-carboxypropyl]wyosine(37) in tRNA(Phe) + S-methyl-5'-thioadenosine + H(+). The protein operates within tRNA modification; wybutosine-tRNA(Phe) biosynthesis. S-adenosyl-L-methionine-dependent transferase that acts as a component of the wybutosine biosynthesis pathway. Wybutosine is a hyper modified guanosine with a tricyclic base found at the 3'-position adjacent to the anticodon of eukaryotic phenylalanine tRNA. Catalyzes the transfer of the alpha-amino-alpha-carboxypropyl (acp) group from S-adenosyl-L-methionine to the C-7 position of 4-demethylwyosine (imG-14) to produce wybutosine-86. The protein is tRNA wybutosine-synthesizing protein 2 homolog (TRMT12) of Bos taurus (Bovine).